A 328-amino-acid polypeptide reads, in one-letter code: Malate dehydrogenase (328 aa).

NAD(+) is bound at residue 16 to 22 (GAAGQIS). Positions 97 and 103 each coordinate substrate. Residues Asn110, Gln117, and 134–136 (VGN) contribute to the NAD(+) site. Substrate contacts are provided by Asn136 and Arg167. Catalysis depends on His192, which acts as the Proton acceptor.

This sequence belongs to the LDH/MDH superfamily. MDH type 2 family.

It catalyses the reaction (S)-malate + NAD(+) = oxaloacetate + NADH + H(+). Catalyzes the reversible oxidation of malate to oxaloacetate. The protein is Malate dehydrogenase of Corynebacterium glutamicum (strain R).